We begin with the raw amino-acid sequence, 508 residues long: UTP--glucose-1-phosphate uridylyltransferase (508 aa).

An N-acetylserine modification is found at S2. Phosphoserine is present on residues S2 and S13. Residues 113–116 (LNGG), K127, Q190, and G222 each bind UTP. Residue 115 to 116 (GG) participates in substrate binding. A Mg(2+)-binding site is contributed by K127. Substrate is bound by residues H223, 251–253 (NID), and N330. A UTP-binding site is contributed by D253. Position 253 (D253) interacts with Mg(2+). K396 provides a ligand contact to UTP. Residue K396 is part of the active site. T426 bears the Phosphothreonine mark. Phosphoserine is present on S434. Position 438 is an N6-acetyllysine (K438). Residues S448 and S461 each carry the phosphoserine modification. The segment at 457–508 (HLTVSGDVTFGKNVSLKGTVIIIANHGDRIDIPPGAVLENKIVSGNLRILDH) is oligomerization. The interval 502 to 503 (NL) is critical for end-to-end subunit interaction.

The protein belongs to the UDPGP type 1 family. As to quaternary structure, homooctamer. In terms of tissue distribution, highly expressed in various brain regions. Expressed in amygdala, anterior cingulate cortex, caudate, cerebellar hemisphere, cerebellum, cortex, frontal cortex, hippocampus, hypothalamus, nucleus accumbens, putamen, spinal cord and substantia nigra. Also widely expressed among other tissues, including liver, heart, placenta, lung, kidney, pancreas and skeletal muscle.

It is found in the cytoplasm. The catalysed reaction is alpha-D-glucose 1-phosphate + UTP + H(+) = UDP-alpha-D-glucose + diphosphate. The protein operates within glycan biosynthesis; glycogen biosynthesis. In terms of biological role, UTP--glucose-1-phosphate uridylyltransferase catalyzing the conversion of glucose-1-phosphate into UDP-glucose, a crucial precursor for the production of glycogen. This chain is UTP--glucose-1-phosphate uridylyltransferase, found in Homo sapiens (Human).